The chain runs to 737 residues: MAGLWVRTVALLAARRHWRRSSQQLLWTLKRAPRSSQQLLWTLKRAPVYSQQCLVVSRSLSSVEYEPKEKTFDKILIANRGEIACRVIKTCRKMGIRTVAIHSDVDASSVHVKMADEAVCVGPAPTSKSYLNMDAIMEAIKKTGAQAVHPGYGFLSENKEFAKCLAAEDVTFIGPDTHAIQAMGDKIESKLLAKRAKVNTIPGFDGVLKDADEAVRIAREIGYPVMIKASAGGGGKGMRIPWDDEETRDGFRFSSQEAASSFGDDRLLIEKFIDNPRHIEIQVLGDKHGNALWLNERECSIQRRNQKVVEEAPSIFLDPETRRAMGEQAVAWPKAVKYSSAGTVEFLVDSQKNFYFLEMNTRLQVEHPVTECITGLDLVQEMILVAKGYPLRHKQEDIPISGWAVECRVYAEDPYKSFGLPSIGRLSQYQEPIHLPGVRVDSGIQPGSDISIYHDPMISKLVTYGSDRAEALKRMEDALDSYVIRGVTHNIPLLREVIINTRFVKGDISTKFLSDVYPDGFKGHMLTPSERDQLLAIASSLFVASQLRAQRFQEHSRVPVIRPDVAKWELSVKLHDEDHTVVASNNGPTFNVEVDGSKLNVTSTWNLASPLLSVNVDGTQRTVQCLSPDAGGNMSIQFLGTVYKVHILTKLAAELNKFMLEKVPKDTSSVLRSPKPGVVVAVSVKPGDMVAEGQEICVIEAMKMQNSMTAGKMGKVKLVHCKAGDTVGEGDLLVELE.

A mitochondrion-targeting transit peptide spans 1–61 (MAGLWVRTVA…QCLVVSRSLS (61 aa)). Positions 71 to 518 (TFDKILIANR…STKFLSDVYP (448 aa)) constitute a Biotin carboxylation domain. Lys74 bears the N6-acetyllysine; alternate mark. Lys74 is modified (N6-succinyllysine; alternate). Position 128 is an N6-succinyllysine (Lys128). Lys159 carries the post-translational modification N6-acetyllysine; alternate. Lys159 carries the N6-succinyllysine; alternate modification. Position 163 is an N6-acetyllysine (Lys163). Lys186 provides a ligand contact to ATP. The ATP-grasp domain maps to 190–387 (KLLAKRAKVN…LVQEMILVAK (198 aa)). At Lys197 the chain carries N6-succinyllysine. Lys209 carries the post-translational modification N6-acetyllysine; alternate. Lys209 is modified (N6-succinyllysine; alternate). ATP contacts are provided by residues 218–279 (AREI…PRHI), Glu270, and Asn305. Residue Ser261 is modified to Phosphoserine. Lys271 bears the N6-succinyllysine mark. N6-acetyllysine; alternate is present on Lys337. Lys337 bears the N6-succinyllysine; alternate mark. Mg(2+)-binding residues include Glu345, Glu358, and Asn360. Residues Glu345, Glu358, and Asn360 each coordinate Mn(2+). The active site involves Arg362. N6-succinyllysine occurs at positions 394 and 416. Phe418 lines the biotin pocket. Lys505 carries the post-translational modification N6-acetyllysine. Lys511, Lys522, Lys567, and Lys657 each carry N6-succinyllysine. Residues 658–737 (FMLEKVPKDT…GEGDLLVELE (80 aa)) enclose the Biotinyl-binding domain. N6-biotinyllysine; by HLCS is present on Lys703.

In terms of assembly, the holoenzyme is a dodecamer composed of 6 PCCA/alpha subunits and 6 PCCB/beta subunits. Interacts (via the biotin carboxylation domain) with SIRT4. Interacts with SIRT3 and SIRT5. Biotin serves as cofactor. Mg(2+) is required as a cofactor. It depends on Mn(2+) as a cofactor. Acetylated. In terms of processing, the biotin cofactor is covalently attached to the C-terminal biotinyl-binding domain and is required for the catalytic activity. Biotinylation is catalyzed by HLCS.

It is found in the mitochondrion matrix. The catalysed reaction is propanoyl-CoA + hydrogencarbonate + ATP = (S)-methylmalonyl-CoA + ADP + phosphate + H(+). It carries out the reaction butanoyl-CoA + hydrogencarbonate + ATP = (2S)-ethylmalonyl-CoA + ADP + phosphate + H(+). It participates in metabolic intermediate metabolism; propanoyl-CoA degradation; succinyl-CoA from propanoyl-CoA: step 1/3. Functionally, this is one of the 2 subunits of the biotin-dependent propionyl-CoA carboxylase (PCC), a mitochondrial enzyme involved in the catabolism of odd chain fatty acids, branched-chain amino acids isoleucine, threonine, methionine, and valine and other metabolites. Propionyl-CoA carboxylase catalyzes the carboxylation of propionyl-CoA/propanoyl-CoA to D-methylmalonyl-CoA/(S)-methylmalonyl-CoA. Within the holoenzyme, the alpha subunit catalyzes the ATP-dependent carboxylation of the biotin carried by the biotin carboxyl carrier (BCC) domain, while the beta subunit then transfers the carboxyl group from carboxylated biotin to propionyl-CoA. Propionyl-CoA carboxylase also significantly acts on butyryl-CoA/butanoyl-CoA, which is converted to ethylmalonyl-CoA/(2S)-ethylmalonyl-CoA. Other alternative minor substrates include (2E)-butenoyl-CoA/crotonoyl-CoA. The sequence is that of Propionyl-CoA carboxylase alpha chain, mitochondrial from Rattus norvegicus (Rat).